The sequence spans 166 residues: Protein SprT (166 aa).

Residues 21–160 (ANQHFSREFP…CQQCQQTLAF (140 aa)) form the SprT-like domain. Histidine 74 serves as a coordination point for Zn(2+). Residue glutamate 75 is part of the active site. Histidine 78 contacts Zn(2+).

The protein belongs to the SprT family. Zn(2+) is required as a cofactor.

The protein resides in the cytoplasm. The chain is Protein SprT from Vibrio atlanticus (strain LGP32) (Vibrio splendidus (strain Mel32)).